We begin with the raw amino-acid sequence, 315 residues long: Lipoyl synthase (315 aa).

[4Fe-4S] cluster contacts are provided by cysteine 62, cysteine 67, cysteine 73, cysteine 88, cysteine 92, cysteine 95, and serine 302. In terms of domain architecture, Radical SAM core spans 74-291 (FNHGAATFMI…KKIALKLGFS (218 aa)).

Belongs to the radical SAM superfamily. Lipoyl synthase family. Requires [4Fe-4S] cluster as cofactor.

It is found in the cytoplasm. The catalysed reaction is [[Fe-S] cluster scaffold protein carrying a second [4Fe-4S](2+) cluster] + N(6)-octanoyl-L-lysyl-[protein] + 2 oxidized [2Fe-2S]-[ferredoxin] + 2 S-adenosyl-L-methionine + 4 H(+) = [[Fe-S] cluster scaffold protein] + N(6)-[(R)-dihydrolipoyl]-L-lysyl-[protein] + 4 Fe(3+) + 2 hydrogen sulfide + 2 5'-deoxyadenosine + 2 L-methionine + 2 reduced [2Fe-2S]-[ferredoxin]. It participates in protein modification; protein lipoylation via endogenous pathway; protein N(6)-(lipoyl)lysine from octanoyl-[acyl-carrier-protein]: step 2/2. In terms of biological role, catalyzes the radical-mediated insertion of two sulfur atoms into the C-6 and C-8 positions of the octanoyl moiety bound to the lipoyl domains of lipoate-dependent enzymes, thereby converting the octanoylated domains into lipoylated derivatives. The sequence is that of Lipoyl synthase from Ruthia magnifica subsp. Calyptogena magnifica.